A 468-amino-acid polypeptide reads, in one-letter code: Protein wingless (468 aa).

The N-terminal stretch at 1-17 is a signal peptide; sequence MDISYIFVICLMALCSG. The interval 83 to 106 is binds porcupine; the sequence is VKGANLAISECQHQFRNRRWNCST. The cysteines at positions 93 and 104 are disulfide-linked. N-linked (GlcNAc...) asparagine glycosylation is found at asparagine 103 and asparagine 108. Cystine bridges form between cysteine 146–cysteine 154, cysteine 156–cysteine 185, cysteine 233–cysteine 247, and cysteine 235–cysteine 242. Residue serine 239 is the site of O-palmitoleoyl serine; by PORCN attachment. A disordered region spans residues 333–362; the sequence is ISKIHHPNMPSPNSLPQAGQRGGRNGRRQG. 6 disulfides stabilise this stretch: cysteine 397–cysteine 428, cysteine 413–cysteine 423, cysteine 427–cysteine 467, cysteine 443–cysteine 458, cysteine 445–cysteine 455, and cysteine 450–cysteine 451. N-linked (GlcNAc...) asparagine glycosylation occurs at asparagine 414.

Belongs to the Wnt family. In terms of assembly, monomer; folds by intramolecular disulfide bonds. Interacts with porcupine (por). Interacts with wls; in the Golgi. Interacts with en. Interacts with the proteoglycan Cow (heparan sulfate-bound form); this stabilizes wg and promotes its extracellular distribution. Interacts with peg; the interaction facilitates short-range diffusion of wg. Palmitoleoylated by porcupine. The lipid group functions as a sorting signal, targeting the ligand to polarized vesicles that transport wg to unique sites at the cell surface. Depalmitoleoylated by notum, leading to inhibit Wnt signaling pathway. Post-translationally, major form is glycosylated at 2 sites, glycosylation is stimulated by porcupine at the ER. In terms of tissue distribution, segmented expression in embryos. In embryonic tracheal cells, expression is in stripes flanking the tracheal placode.

The protein resides in the secreted. It localises to the synapse. Its subcellular location is the membrane. It is found in the extracellular space. The protein localises to the extracellular matrix. Binds as a ligand to a family of frizzled seven-transmembrane receptors and acts through a cascade of genes on the nucleus. Segment polarity protein. May be a growth factor. Acts on neighboring cells to regulate at least one gene, the homeobox segmentation gene engrailed. Wg signal represses arm phosphorylation. Wg signaling operates by inactivating the sgg repression of engrailed autoactivation. Wg and Wnt2 have a role in the developing trachea and together are responsible for all dorsal trunk formation. Wg also acts in the developing epidermis. Acts as a morphogen, and diffuses long distances despite its lipidation. Lipophorin is required for diffusion, probably by acting as vehicle for its movement, explaining how it can spread over long distances despite its lipidation. In non-neuronal cells, wls directs wg secretion via clathrin-mediated endocytosis and the retromer complex (a conserved protein complex consisting of Vps26 and Vps35) to sustain a wls traffic loop encompassing the Golgi, the cell surface, an endocytic compartment and a retrograde route leading back to the Golgi. In neuronal cells (the larval motorneuron NMJ), wg signal moves across the synapse through the release of wls-containing exosome-like vesicles. This chain is Protein wingless (wg), found in Drosophila melanogaster (Fruit fly).